Here is a 498-residue protein sequence, read N- to C-terminus: Glycerol kinase (498 aa).

Position 12 (Thr12) interacts with ADP. Thr12, Thr13, and Ser14 together coordinate ATP. Thr12 is a sn-glycerol 3-phosphate binding site. Arg16 lines the ADP pocket. Residues Arg82, Glu83, and Tyr134 each contribute to the sn-glycerol 3-phosphate site. Arg82, Glu83, and Tyr134 together coordinate glycerol. His230 carries the phosphohistidine; by HPr modification. Asp244 serves as a coordination point for sn-glycerol 3-phosphate. Glycerol contacts are provided by Asp244 and Gln245. Positions 266, 309, 313, 410, and 414 each coordinate ADP. Residues Thr266, Gly309, Gln313, and Gly410 each contribute to the ATP site.

Belongs to the FGGY kinase family. As to quaternary structure, homotetramer and homodimer (in equilibrium). In terms of processing, the phosphoenolpyruvate-dependent sugar phosphotransferase system (PTS), including enzyme I, and histidine-containing protein (HPr) are required for the phosphorylation, which leads to the activation of the enzyme.

The catalysed reaction is glycerol + ATP = sn-glycerol 3-phosphate + ADP + H(+). It functions in the pathway polyol metabolism; glycerol degradation via glycerol kinase pathway; sn-glycerol 3-phosphate from glycerol: step 1/1. Activated by phosphorylation and inhibited by fructose 1,6-bisphosphate (FBP). Key enzyme in the regulation of glycerol uptake and metabolism. Catalyzes the phosphorylation of glycerol to yield sn-glycerol 3-phosphate. This is Glycerol kinase from Staphylococcus aureus (strain COL).